The chain runs to 219 residues: Dual specificity phosphatase 29 (219 aa).

One can recognise a Tyrosine-protein phosphatase domain in the interval 53 to 201 (HVNEVWPKLY…LRELDRQLVQ (149 aa)). 145 to 152 (HCVMGRSR) provides a ligand contact to substrate. Residue Cys146 is the Phosphocysteine intermediate of the active site.

It belongs to the protein-tyrosine phosphatase family. Non-receptor class dual specificity subfamily. In terms of assembly, homodimer. Interacts with PRKAA2.

Its subcellular location is the cytoplasm. It localises to the nucleus. The enzyme catalyses O-phospho-L-tyrosyl-[protein] + H2O = L-tyrosyl-[protein] + phosphate. The catalysed reaction is O-phospho-L-seryl-[protein] + H2O = L-seryl-[protein] + phosphate. It catalyses the reaction O-phospho-L-threonyl-[protein] + H2O = L-threonyl-[protein] + phosphate. In terms of biological role, dual specificity phosphatase able to dephosphorylate phosphotyrosine, phosphoserine and phosphothreonine residues within the same substrate, with a preference for phosphotyrosine as a substrate. Involved in the modulation of intracellular signaling cascades. May regulate glucose metabolism by activating, AMPK, an energy sensor protein kinase. Affects MAP kinase signaling though modulation of the ERK1/2 cascade in skeletal muscle promoting muscle cell differentiation, development and atrophy. The polypeptide is Dual specificity phosphatase 29 (DUSP29) (Bos taurus (Bovine)).